The sequence spans 119 residues: MSQRQQRVADLIHQQLAELLKKEVRDSRLSKISLTAVSISPDLKQAKVFYSLLENQNEKEVQKALNKATGYLRHLLAQATVLRYVPKLEFVYDESIERAHRISLLIERALKKDDSDESS.

It belongs to the RbfA family. As to quaternary structure, monomer. Binds 30S ribosomal subunits, but not 50S ribosomal subunits or 70S ribosomes.

It localises to the cytoplasm. Functionally, one of several proteins that assist in the late maturation steps of the functional core of the 30S ribosomal subunit. Associates with free 30S ribosomal subunits (but not with 30S subunits that are part of 70S ribosomes or polysomes). Required for efficient processing of 16S rRNA. May interact with the 5'-terminal helix region of 16S rRNA. This Coxiella burnetii (strain CbuK_Q154) (Coxiella burnetii (strain Q154)) protein is Ribosome-binding factor A.